A 138-amino-acid chain; its full sequence is Histone H2B.4 (138 aa).

A compositionally biased stretch (basic and acidic residues) spans 1–39; sequence MAPKAAEKKPAEKKPAGKAPAEKLPKAEKKISKDAGGSE. Positions 1 to 48 are disordered; the sequence is MAPKAAEKKPAEKKPAGKAPAEKLPKAEKKISKDAGGSEKKKKKSKKS. Residue Ala-2 is modified to N,N,N-trimethylalanine; alternate. Position 2 is a n,N-dimethylalanine; alternate (Ala-2). N-methylalanine; alternate is present on Ala-2. Lys-4 carries the N6-methyllysine modification. 2 positions are modified to N6-acetyllysine: Lys-8 and Lys-13. An N6,N6-dimethyllysine modification is found at Lys-14. Lys-18, Lys-23, Lys-29, and Lys-30 each carry N6-acetyllysine. Lys-135 is covalently cross-linked (Glycyl lysine isopeptide (Lys-Gly) (interchain with G-Cter in ubiquitin)).

Belongs to the histone H2B family. In terms of assembly, the nucleosome is a histone octamer containing two molecules each of H2A, H2B, H3 and H4 assembled in one H3-H4 heterotetramer and two H2A-H2B heterodimers. The octamer wraps approximately 147 bp of DNA. In terms of processing, can be acetylated to form H2BK6ac, H2BK33ac and H2BK34ac. Monoubiquitinated by BRE1 to form H2BK143ub1 and deubiquitinated by UBP26. Required for heterochromatic histone H3 di- and trimethylation at H3K4me. May give a specific tag for epigenetic transcriptional activation.

It localises to the nucleus. Its subcellular location is the chromosome. In terms of biological role, core component of nucleosome. Nucleosomes wrap and compact DNA into chromatin, limiting DNA accessibility to the cellular machineries which require DNA as a template. Histones thereby play a central role in transcription regulation, DNA repair, DNA replication and chromosomal stability. DNA accessibility is regulated via a complex set of post-translational modifications of histones, also called histone code, and nucleosome remodeling. The polypeptide is Histone H2B.4 (Arabidopsis thaliana (Mouse-ear cress)).